Reading from the N-terminus, the 624-residue chain is Altered inheritance of mitochondria protein 9, mitochondrial (624 aa).

The transit peptide at 1-34 (MLSRVARCSRTLNQVTRNGQSGLFSAVLRTSIRQ) directs the protein to the mitochondrion.

Belongs to the AIM9 family.

The protein resides in the mitochondrion. The protein is Altered inheritance of mitochondria protein 9, mitochondrial (AIM9) of Candida albicans (strain WO-1) (Yeast).